The primary structure comprises 302 residues: Cyclin-C (302 aa).

Positions 46 to 152 (NFITAVATEG…VYDSEFILVE (107 aa)) constitute a Cyclin N-terminal domain. A disordered region spans residues 281–302 (LPKPNQQPPPQQQHQHQQGYHL). Residues 292–302 (QQHQHQQGYHL) are compositionally biased toward low complexity.

It belongs to the cyclin family. Cyclin C subfamily. Component of the Mediator complex.

Its subcellular location is the nucleus. Its function is as follows. Component of the Mediator complex, a coactivator involved in regulated gene transcription of nearly all RNA polymerase II-dependent genes. Mediator functions as a bridge to convey information from gene-specific regulatory proteins to the basal RNA polymerase II transcription machinery. Mediator is recruited to promoters by direct interactions with regulatory proteins and serves as a scaffold for the assembly of a functional preinitiation complex with RNA polymerase II and the general transcription factors. Binds to and activates cyclin-dependent kinase cdk-8 that phosphorylates the CTD (C-terminal domain) of the large subunit of RNA polymerase II (RNAp II), which may inhibit the formation of a transcription initiation complex. This is Cyclin-C (cic-1) from Caenorhabditis elegans.